Reading from the N-terminus, the 439-residue chain is Acetyl esterase Axe7A (439 aa).

The signal sequence occupies residues 1–31; sequence MFNFAPKQTTEMKKLLFTLVFVLGSMATALA. Ser309 serves as the catalytic Nucleophile. Catalysis depends on charge relay system residues Asp391 and His420.

It belongs to the carbohydrate esterase 7 family.

The protein operates within glycan degradation; xylan degradation. Involved in degradation of plant cell wall polysaccharides. Has acetyl esterase activity towards a broad range of substrates including xylose-tetraacetate, 4-O-methylumbelliferyl acetate, glucose-pentaacetate, cephalosporin C, and acetylated xylo-oligosaccharides smaller than xylo-heptaose. Displays no detectable activity on polymeric acetylated xylan. The protein is Acetyl esterase Axe7A of Xylanibacter ruminicola (strain ATCC 19189 / DSM 19721 / CIP 105475 / JCM 8958 / 23) (Prevotella ruminicola).